We begin with the raw amino-acid sequence, 555 residues long: Trehalase (555 aa).

The signal sequence occupies residues 1–16 (MIPFLLMVAFADTVLQ). Residue N46 is glycosylated (N-linked (GlcNAc...) asparagine). Substrate is bound by residues R164, 171–172 (WD), and N208. N-linked (GlcNAc...) asparagine glycosylation occurs at N216. Substrate-binding positions include 217–219 (RSQ), 282–284 (RPE), and G316. Catalysis depends on D318, which acts as the Proton donor/acceptor. N-linked (GlcNAc...) asparagine glycans are attached at residues N334 and N371. E516 serves as the catalytic Proton donor/acceptor. E531 contributes to the substrate binding site.

Belongs to the glycosyl hydrolase 37 family. Bean-shaped accessory glands (bags).

The protein resides in the secreted. The catalysed reaction is alpha,alpha-trehalose + H2O = alpha-D-glucose + beta-D-glucose. The protein is Trehalase of Tenebrio molitor (Yellow mealworm beetle).